Here is a 205-residue protein sequence, read N- to C-terminus: Small ribosomal subunit protein uS5 (205 aa).

The disordered stretch occupies residues 1–25; it reads MSGAQRGQRGGERRGGRDDRRGQGA. Residues 9 to 24 show a composition bias toward basic and acidic residues; sequence RGGERRGGRDDRRGQG. The S5 DRBM domain maps to 30–93; it reads YIERVVAINR…EEAKKHFFRV (64 aa).

It belongs to the universal ribosomal protein uS5 family. Part of the 30S ribosomal subunit. Contacts proteins S4 and S8.

With S4 and S12 plays an important role in translational accuracy. Functionally, located at the back of the 30S subunit body where it stabilizes the conformation of the head with respect to the body. This is Small ribosomal subunit protein uS5 from Nocardioides sp. (strain ATCC BAA-499 / JS614).